Here is a 213-residue protein sequence, read N- to C-terminus: Hemolysin-3 homolog (213 aa).

Transmembrane regions (helical) follow at residues 11 to 31, 41 to 61, 75 to 95, 103 to 123, 127 to 147, 157 to 177, and 185 to 205; these read AITH…LIIF, IVSF…STLL, IIDH…FLLG, FTLL…KIFF, FILL…IAVK, GFSL…FYIW, and AIWH…VLFY.

It belongs to the UPF0073 (Hly-III) family.

The protein resides in the cell membrane. This Bacillus subtilis (strain 168) protein is Hemolysin-3 homolog (yplQ).